The primary structure comprises 953 residues: Homeobox protein LUMINIDEPENDENS (953 aa).

The segment at residues 63–123 is a DNA-binding region (homeobox); it reads KIGKRPRDLL…VTQKTRVRKQ (61 aa). The segment at 404-430 is disordered; it reads EQPGQKAAGKSPQTVRIGTSGRSRPMS. Positions 414–425 are enriched in polar residues; the sequence is SPQTVRIGTSGR. A run of 5 repeats spans residues 498–502, 507–511, 516–520, 525–529, and 534–538. The tract at residues 498–538 is 5 X 5 AA repeats of Q-P-V-N-G; that stretch reads QPVNGFSTIQPVNGPSAVQPVNGPLAVQPVNGPSALQPVNG. Disordered stretches follow at residues 606–668, 733–763, and 861–953; these read NSKE…EPQD, APNS…NPGM, and VGQM…KRWR. A compositionally biased stretch (basic and acidic residues) spans 608–623; sequence KEADVQRNRNRRERET. The segment covering 651-661 has biased composition (low complexity); the sequence is PEIPSQQPPEE. A compositionally biased stretch (polar residues) spans 733-742; the sequence is APNSSSSSNK. Residues 869-884 show a composition bias toward low complexity; sequence SSSWRSQQSQNSYYSH. Polar residues-rich tracts occupy residues 888–934 and 942–953; these read EIAS…QQQA and THPYWNQNKRWR.

Interacts with SUF4. In terms of tissue distribution, expressed in shoot apex, root apex, leaf primordia and floral buds.

Its subcellular location is the nucleus. Its function is as follows. Seems to play a role in the regulation of flowering time in the autonomous flowering pathway by repressing FLOWERING LOCUS C expression. The protein is Homeobox protein LUMINIDEPENDENS (LD) of Arabidopsis thaliana (Mouse-ear cress).